Here is a 376-residue protein sequence, read N- to C-terminus: Glutamate 5-kinase (376 aa).

Lys-15 is a binding site for ATP. Substrate-binding residues include Ser-56, Asp-143, and Asn-155. 175-176 contributes to the ATP binding site; that stretch reads SD. The region spanning 281–358 is the PUA domain; it reads KGTLTIDAGA…PDVMMILGIT (78 aa).

Belongs to the glutamate 5-kinase family.

The protein localises to the cytoplasm. The enzyme catalyses L-glutamate + ATP = L-glutamyl 5-phosphate + ADP. Its pathway is amino-acid biosynthesis; L-proline biosynthesis; L-glutamate 5-semialdehyde from L-glutamate: step 1/2. Its function is as follows. Catalyzes the transfer of a phosphate group to glutamate to form L-glutamate 5-phosphate. This Rhodopseudomonas palustris (strain TIE-1) protein is Glutamate 5-kinase.